The chain runs to 287 residues: Bifunctional protein FolD (287 aa).

NADP(+)-binding positions include 165–167, S190, and I233; that span reads NRS.

Belongs to the tetrahydrofolate dehydrogenase/cyclohydrolase family. In terms of assembly, homodimer.

It carries out the reaction (6R)-5,10-methylene-5,6,7,8-tetrahydrofolate + NADP(+) = (6R)-5,10-methenyltetrahydrofolate + NADPH. It catalyses the reaction (6R)-5,10-methenyltetrahydrofolate + H2O = (6R)-10-formyltetrahydrofolate + H(+). The protein operates within one-carbon metabolism; tetrahydrofolate interconversion. Its function is as follows. Catalyzes the oxidation of 5,10-methylenetetrahydrofolate to 5,10-methenyltetrahydrofolate and then the hydrolysis of 5,10-methenyltetrahydrofolate to 10-formyltetrahydrofolate. The protein is Bifunctional protein FolD of Nitrosopumilus maritimus (strain SCM1).